The sequence spans 292 residues: NAD kinase (292 aa).

Residue aspartate 73 is the Proton acceptor of the active site. NAD(+)-binding positions include 73 to 74 (DG), 147 to 148 (NE), histidine 158, arginine 175, aspartate 177, 188 to 193 (TAYSLS), and glutamine 247.

The protein belongs to the NAD kinase family. Requires a divalent metal cation as cofactor.

It localises to the cytoplasm. It carries out the reaction NAD(+) + ATP = ADP + NADP(+) + H(+). Involved in the regulation of the intracellular balance of NAD and NADP, and is a key enzyme in the biosynthesis of NADP. Catalyzes specifically the phosphorylation on 2'-hydroxyl of the adenosine moiety of NAD to yield NADP. This Photorhabdus laumondii subsp. laumondii (strain DSM 15139 / CIP 105565 / TT01) (Photorhabdus luminescens subsp. laumondii) protein is NAD kinase.